Here is a 186-residue protein sequence, read N- to C-terminus: Small ribosomal subunit protein uS5 (186 aa).

One can recognise an S5 DRBM domain in the interval 20-83; the sequence is FVDKLVHINR…EAAKRDMIFV (64 aa).

Belongs to the universal ribosomal protein uS5 family. In terms of assembly, part of the 30S ribosomal subunit. Contacts proteins S4 and S8.

Its function is as follows. With S4 and S12 plays an important role in translational accuracy. Located at the back of the 30S subunit body where it stabilizes the conformation of the head with respect to the body. The sequence is that of Small ribosomal subunit protein uS5 from Brucella anthropi (strain ATCC 49188 / DSM 6882 / CCUG 24695 / JCM 21032 / LMG 3331 / NBRC 15819 / NCTC 12168 / Alc 37) (Ochrobactrum anthropi).